The following is a 143-amino-acid chain: MAKKIVGFIKLQVPAGKANPSPPIGPALGQRGLNIMEFCKAFNAQTQGVEPGLPLPVVITAFADKSFTFIIKTPPATVLIKKAIKLDKGSSNPLKNKVGKITRAQLEEIANTKLKDMNAADVDAAVRTLAGSARSMGVIVEGV.

It belongs to the universal ribosomal protein uL11 family. In terms of assembly, part of the ribosomal stalk of the 50S ribosomal subunit. Interacts with L10 and the large rRNA to form the base of the stalk. L10 forms an elongated spine to which L12 dimers bind in a sequential fashion forming a multimeric L10(L12)X complex. In terms of processing, one or more lysine residues are methylated.

In terms of biological role, forms part of the ribosomal stalk which helps the ribosome interact with GTP-bound translation factors. This is Large ribosomal subunit protein uL11 from Delftia acidovorans (strain DSM 14801 / SPH-1).